Here is a 356-residue protein sequence, read N- to C-terminus: Holliday junction branch migration complex subunit RuvB (356 aa).

Positions 13-201 (SSNLSRKTRL…FGITQRLNFY (189 aa)) are large ATPase domain (RuvB-L). Residues 15-35 (NLSRKTRLLDPTPSLEEGKVR) form a disordered region. ATP contacts are provided by residues Leu40, Arg41, Gly82, Lys85, Thr86, Thr87, 148–150 (EDF), Arg191, Tyr201, and Arg238. Thr86 contacts Mg(2+). The tract at residues 202-273 (SISDLNRIIQ…LVDKSLTLHQ (72 aa)) is small ATPAse domain (RuvB-S). The head domain (RuvB-H) stretch occupies residues 276-356 (ECGLDQSDRR…NSCKNSPIIK (81 aa)). DNA contacts are provided by Arg331 and Arg336.

Belongs to the RuvB family. In terms of assembly, homohexamer. Forms an RuvA(8)-RuvB(12)-Holliday junction (HJ) complex. HJ DNA is sandwiched between 2 RuvA tetramers; dsDNA enters through RuvA and exits via RuvB. An RuvB hexamer assembles on each DNA strand where it exits the tetramer. Each RuvB hexamer is contacted by two RuvA subunits (via domain III) on 2 adjacent RuvB subunits; this complex drives branch migration. In the full resolvosome a probable DNA-RuvA(4)-RuvB(12)-RuvC(2) complex forms which resolves the HJ.

It is found in the cytoplasm. The catalysed reaction is ATP + H2O = ADP + phosphate + H(+). In terms of biological role, the RuvA-RuvB-RuvC complex processes Holliday junction (HJ) DNA during genetic recombination and DNA repair, while the RuvA-RuvB complex plays an important role in the rescue of blocked DNA replication forks via replication fork reversal (RFR). RuvA specifically binds to HJ cruciform DNA, conferring on it an open structure. The RuvB hexamer acts as an ATP-dependent pump, pulling dsDNA into and through the RuvAB complex. RuvB forms 2 homohexamers on either side of HJ DNA bound by 1 or 2 RuvA tetramers; 4 subunits per hexamer contact DNA at a time. Coordinated motions by a converter formed by DNA-disengaged RuvB subunits stimulates ATP hydrolysis and nucleotide exchange. Immobilization of the converter enables RuvB to convert the ATP-contained energy into a lever motion, pulling 2 nucleotides of DNA out of the RuvA tetramer per ATP hydrolyzed, thus driving DNA branch migration. The RuvB motors rotate together with the DNA substrate, which together with the progressing nucleotide cycle form the mechanistic basis for DNA recombination by continuous HJ branch migration. Branch migration allows RuvC to scan DNA until it finds its consensus sequence, where it cleaves and resolves cruciform DNA. The chain is Holliday junction branch migration complex subunit RuvB from Prochlorococcus marinus (strain SARG / CCMP1375 / SS120).